The primary structure comprises 901 residues: Clathrin coat assembly protein AP180 (901 aa).

The region spanning 14-145 (QYSVTGSAVA…FSYRQMAFDF (132 aa)) is the ENTH domain. Disordered regions lie at residues 285-326 (LEGK…DTSP), 397-424 (PISD…STTT), 497-522 (PETS…PSPA), and 573-606 (AAAP…PESS). A phosphoserine mark is found at Ser296, Ser300, and Ser306. The span at 302-324 (LSKSSPATTVTSPNSTPAKTIDT) shows a compositional bias: polar residues. An O-linked (GlcNAc) threonine glycan is attached at Thr310. Ser313 bears the Phosphoserine mark. Thr317 is subject to Phosphothreonine. 2 stretches are compositionally biased toward low complexity: residues 410–424 (TTTT…STTT) and 500–511 (SAPVVTPTASTA). Residues 512–522 (PPVPATAPSPA) are compositionally biased toward pro residues. Ser594, Ser600, Ser621, Ser627, and Ser761 each carry phosphoserine. Disordered regions lie at residues 803-845 (SAGV…GMTM) and 857-901 (MMRP…KDFL). Residues 835-845 (GMPPSGTGMTM) show a composition bias toward low complexity. Arg859 is modified (asymmetric dimethylarginine; alternate). Arg859 is modified (omega-N-methylarginine; alternate). Polar residues predominate over residues 870 to 882 (TQLSPSPTPATQS). The segment covering 887–901 (PAKDPLADLNIKDFL) has biased composition (basic and acidic residues).

The protein belongs to the PICALM/SNAP91 family. Binds AP2A2. Interacts with AP2B1; clathrin competes with SNAP91. In terms of processing, thr-310 can be modified by the addition of N-acetylglucosamine which can be further phosphorylated. There is no evidence for direct Thr-310 phosphorylation. As to expression, brain. Associated with the synapses.

Its subcellular location is the cell membrane. It is found in the membrane. The protein localises to the coated pit. Its function is as follows. Adaptins are components of the adaptor complexes which link clathrin to receptors in coated vesicles. Clathrin-associated protein complexes are believed to interact with the cytoplasmic tails of membrane proteins, leading to their selection and concentration. Binding of AP180 to clathrin triskelia induces their assembly into 60-70 nm coats. The sequence is that of Clathrin coat assembly protein AP180 (Snap91) from Mus musculus (Mouse).